Consider the following 405-residue polypeptide: Phosphopentomutase (405 aa).

6 residues coordinate Mn(2+): D10, D305, H310, D346, H347, and H358.

Belongs to the phosphopentomutase family. Mn(2+) serves as cofactor.

The protein localises to the cytoplasm. The enzyme catalyses 2-deoxy-alpha-D-ribose 1-phosphate = 2-deoxy-D-ribose 5-phosphate. It catalyses the reaction alpha-D-ribose 1-phosphate = D-ribose 5-phosphate. It participates in carbohydrate degradation; 2-deoxy-D-ribose 1-phosphate degradation; D-glyceraldehyde 3-phosphate and acetaldehyde from 2-deoxy-alpha-D-ribose 1-phosphate: step 1/2. Functionally, isomerase that catalyzes the conversion of deoxy-ribose 1-phosphate (dRib-1-P) and ribose 1-phosphate (Rib-1-P) to deoxy-ribose 5-phosphate (dRib-5-P) and ribose 5-phosphate (Rib-5-P), respectively. This chain is Phosphopentomutase, found in Methylobacterium sp. (strain 4-46).